Consider the following 173-residue polypeptide: Small ribosomal subunit protein uS9 (173 aa).

Positions 20–53 are disordered; that stretch reads SYTTESEVPVEGEYTSESVASRFGEPQPAAGLGR.

This sequence belongs to the universal ribosomal protein uS9 family.

This is Small ribosomal subunit protein uS9 from Streptomyces avermitilis (strain ATCC 31267 / DSM 46492 / JCM 5070 / NBRC 14893 / NCIMB 12804 / NRRL 8165 / MA-4680).